Here is a 56-residue protein sequence, read N- to C-terminus: Large ribosomal subunit protein bL33 (56 aa).

It belongs to the bacterial ribosomal protein bL33 family.

This chain is Large ribosomal subunit protein bL33, found in Halorhodospira halophila (strain DSM 244 / SL1) (Ectothiorhodospira halophila (strain DSM 244 / SL1)).